The following is a 182-amino-acid chain: UPF0301 protein NGK_1355 (182 aa).

This sequence belongs to the UPF0301 (AlgH) family.

This Neisseria gonorrhoeae (strain NCCP11945) protein is UPF0301 protein NGK_1355.